We begin with the raw amino-acid sequence, 315 residues long: Eukaryotic translation initiation factor 2 subunit 1 (315 aa).

In terms of domain architecture, S1 motif spans 17–88 (DDVVMVNVRS…DKGYIDLSKR (72 aa)). Phosphoserine is present on residues Ser49 and Ser52. Residues 292-315 (RLEKENAEVDGDDDAEEMEAKTED) are disordered. Over residues 299 to 308 (EVDGDDDAEE) the composition is skewed to acidic residues.

It belongs to the eIF-2-alpha family. In terms of assembly, eukaryotic translation initiation factor 2 eIF2 is a heterotrimeric complex composed of an alpha, a beta and a gamma subunit. Post-translationally, phosphorylation at Ser-49 and Ser-52 stabilizes the eIF-2/GDP/eIF2B complex and prevents GDP/GTP exchange reaction, thus impairing the recycling of eIF-2 between successive rounds of initiation and leading to global inhibition of translation, while concomitantly initiating the preferential translation of integrated stress response (ISR)-specific mRNAs.

It localises to the cytoplasm. Its subcellular location is the stress granule. It is found in the cytosol. Activity is regulated by phosphorylation at Ser-49 and Ser-52, which stabilizes the eIF-2/GDP/eIF2B complex and prevents the eIF2B-mediated exchange of GDP for GTP, thereby preventing the formation of the 43S pre-initiation complex (PIC). This results in the global attenuation of 5' cap-dependent protein synthesis and concomitant translation of ISR-specific mRNAs that contain a short upstream open reading frame (uORF) in their 5' UTR. In terms of biological role, functions in the early steps of protein synthesis by forming a ternary complex with GTP and initiator tRNA. This complex binds to a 40S ribosomal subunit, followed by mRNA binding to form a 43S pre-initiation complex. Junction of the 60S ribosomal subunit to form the 80S initiation complex is preceded by hydrolysis of the GTP bound to eIF-2 and release of an eIF-2-GDP binary complex. In order for eIF-2 to recycle and catalyze another round of initiation, the GDP bound to eIF-2 must exchange with GTP by way of a reaction catalyzed by eIF2B. EIF2S1/eIF2-alpha is a key component of the integrated stress response (ISR), required for adaptation to various stress: phosphorylation by metabolic-stress sensing protein kinases in response to stress converts EIF2S1/eIF-2-alpha in a global protein synthesis inhibitor, leading to a attenuation of cap-dependent translation, while concomitantly initiating the preferential translation of ISR-specific mRNAs, such as the transcriptional activators ATF4 and QRICH1. The chain is Eukaryotic translation initiation factor 2 subunit 1 (eif2s1) from Xenopus tropicalis (Western clawed frog).